A 348-amino-acid chain; its full sequence is Phosphate acyltransferase (348 aa).

This sequence belongs to the PlsX family. In terms of assembly, homodimer. Probably interacts with PlsY.

It localises to the cytoplasm. It catalyses the reaction a fatty acyl-[ACP] + phosphate = an acyl phosphate + holo-[ACP]. The protein operates within lipid metabolism; phospholipid metabolism. Its function is as follows. Catalyzes the reversible formation of acyl-phosphate (acyl-PO(4)) from acyl-[acyl-carrier-protein] (acyl-ACP). This enzyme utilizes acyl-ACP as fatty acyl donor, but not acyl-CoA. This chain is Phosphate acyltransferase, found in Leuconostoc citreum (strain KM20).